We begin with the raw amino-acid sequence, 147 residues long: Hemoglobin subunit beta (147 aa).

S2 bears the N-acetylserine mark. Positions 3–147 constitute a Globin domain; sequence FLSAEEKNLV…VASALAHRYH (145 aa). S45 bears the Phosphoserine mark. K60 carries the N6-acetyllysine modification. Position 64 (H64) interacts with heme b. K83 carries the N6-acetyllysine modification. Position 93 (H93) interacts with heme b. C94 carries the S-nitrosocysteine modification.

The protein belongs to the globin family. Heterotetramer of two alpha chains and two beta chains. As to expression, red blood cells.

Involved in oxygen transport from the lung to the various peripheral tissues. This Panthera pardus orientalis (Amur leopard) protein is Hemoglobin subunit beta (HBB).